The primary structure comprises 76 residues: Alpha/kappa-conotoxin pl14a (76 aa).

A signal peptide spans 1–24 (MPSVRSVTCCCLLWMMFSVQLVTP). A propeptide spanning residues 25–39 (GSPGTAQLSGHRTAR) is cleaved from the precursor. Intrachain disulfides connect Cys-46–Cys-61 and Cys-50–Cys-63. Residue Arg-64 is modified to Arginine amide. A propeptide spanning residues 65 to 76 (GKRDAVSSSMAV) is cleaved from the precursor.

This sequence belongs to the conotoxin J superfamily. Expressed by the venom duct.

Its subcellular location is the secreted. Highly inhibits both nicotinic acetylcholine receptors (neuronal (IC(50)=8.7 uM for alpha-3/beta-4) and muscular (IC(50)=0.54 uM for alpha-1-beta-1-epsilon-delta (CHRNA1-CHRNB1-CHRND-CHRNE)) subtypes) and the voltage-gated potassium channel Kv1.6/KCNA6 subtype (IC(50)=1.59 uM). This Conus planorbis (Planorbis cone) protein is Alpha/kappa-conotoxin pl14a.